The chain runs to 202 residues: Superoxide dismutase [Mn] (202 aa).

Position 27 (His27) interacts with Mn(2+). Phosphothreonine is present on residues Thr34 and Thr70. Residues His82, Asp164, and His168 each coordinate Mn(2+).

The protein belongs to the iron/manganese superoxide dismutase family. As to quaternary structure, homodimer; under aerobic conditions. Under anaerobic conditions it is a component of the so-called 'green protein' complex (GPC), which consists of at least two components, SodA and a nucleoside diphosphate kinase (NDK). Mn(2+) serves as cofactor.

The protein localises to the cytoplasm. It carries out the reaction 2 superoxide + 2 H(+) = H2O2 + O2. In terms of biological role, destroys superoxide anion radicals which are normally produced within the cells and which are toxic to biological systems. Active only in homodimeric state. In Virgibacillus halodenitrificans (Bacillus halodenitrificans), this protein is Superoxide dismutase [Mn] (sodA).